The primary structure comprises 613 residues: Portal protein (613 aa).

The segment at 577 to 613 (ATGGDHGIRQAPSARGDTEPDHAKSKPARDPPPGAGS) is disordered. Residues 592–605 (GDTEPDHAKSKPAR) are compositionally biased toward basic and acidic residues.

It belongs to the herpesviridae portal protein family. As to quaternary structure, homododecamerizes. Interacts with terminase subunits TRM1 and TRM3.

The protein resides in the virion. It localises to the host nucleus. The protein localises to the host cytoplasm. In terms of biological role, forms a portal in the viral capsid through which viral DNA is translocated during DNA packaging. Assembles as a dodecamer at a single fivefold axe of the T=16 icosahedric capsid. Binds to the molecular motor that translocates the viral DNA, termed terminase. This chain is Portal protein, found in Epstein-Barr virus (strain B95-8) (HHV-4).